The sequence spans 167 residues: Crossover junction endodeoxyribonuclease RuvC (167 aa).

Active-site residues include Asp7, Glu67, and Asp140. 3 residues coordinate Mg(2+): Asp7, Glu67, and Asp140.

Belongs to the RuvC family. In terms of assembly, homodimer which binds Holliday junction (HJ) DNA. The HJ becomes 2-fold symmetrical on binding to RuvC with unstacked arms; it has a different conformation from HJ DNA in complex with RuvA. In the full resolvosome a probable DNA-RuvA(4)-RuvB(12)-RuvC(2) complex forms which resolves the HJ. It depends on Mg(2+) as a cofactor.

Its subcellular location is the cytoplasm. It catalyses the reaction Endonucleolytic cleavage at a junction such as a reciprocal single-stranded crossover between two homologous DNA duplexes (Holliday junction).. Functionally, the RuvA-RuvB-RuvC complex processes Holliday junction (HJ) DNA during genetic recombination and DNA repair. Endonuclease that resolves HJ intermediates. Cleaves cruciform DNA by making single-stranded nicks across the HJ at symmetrical positions within the homologous arms, yielding a 5'-phosphate and a 3'-hydroxyl group; requires a central core of homology in the junction. The consensus cleavage sequence is 5'-(A/T)TT(C/G)-3'. Cleavage occurs on the 3'-side of the TT dinucleotide at the point of strand exchange. HJ branch migration catalyzed by RuvA-RuvB allows RuvC to scan DNA until it finds its consensus sequence, where it cleaves and resolves the cruciform DNA. The protein is Crossover junction endodeoxyribonuclease RuvC of Moorella thermoacetica (strain ATCC 39073 / JCM 9320).